Reading from the N-terminus, the 276-residue chain is Rhomboid protease GlpG (276 aa).

The next 6 helical transmembrane spans lie at 94-114, 142-162, 169-189, 192-212, 229-249, and 250-270; these read GPVT…MSLI, IFMH…WYLG, LGSG…GYVQ, FSGP…GYVW, LIIF…GMSM, and ANGA…VDTL. Catalysis depends on serine 201, which acts as the Nucleophile. The active site involves histidine 254.

The protein belongs to the peptidase S54 family.

It localises to the cell inner membrane. It carries out the reaction Cleaves type-1 transmembrane domains using a catalytic dyad composed of serine and histidine that are contributed by different transmembrane domains.. Rhomboid-type serine protease that catalyzes intramembrane proteolysis. The chain is Rhomboid protease GlpG from Salmonella paratyphi A (strain ATCC 9150 / SARB42).